The sequence spans 180 residues: Signal peptidase complex subunit 3 (180 aa).

Residues 1-11 (MNTVLSRANSL) lie on the Cytoplasmic side of the membrane. The chain crosses the membrane as a helical; Signal-anchor for type II membrane protein span at residues 12 to 32 (FAFSLSVMAALTFGCFITTAF). Residues 33-180 (KERSVPVSIA…PDTYETTKSY (148 aa)) are Lumenal-facing. N-linked (GlcNAc...) asparagine glycosylation occurs at N141.

Belongs to the SPCS3 family. As to quaternary structure, component of the signal peptidase complex paralog A (SPC-A) composed of a catalytic subunit SEC11A and three accessory subunits SPCS1, SPCS2 and SPCS3. Component of the signal peptidase complex paralog C (SPC-C) composed of a catalytic subunit SEC11C and three accessory subunits SPCS1, SPCS2 and SPCS3. The complex induces a local thinning of the ER membrane which is used to measure the length of the signal peptide (SP) h-region of protein substrates. This ensures the selectivity of the complex towards h-regions shorter than 18-20 amino acids. Expressed in hen oviduct (at protein level).

The protein localises to the endoplasmic reticulum membrane. In terms of biological role, essential component of the signal peptidase complex (SPC) which catalyzes the cleavage of N-terminal signal sequences from nascent proteins as they are translocated into the lumen of the endoplasmic reticulum. Essential for the SPC catalytic activity, possibly by stabilizing and positioning the active center of the complex close to the lumenal surface. In Gallus gallus (Chicken), this protein is Signal peptidase complex subunit 3.